The following is a 357-amino-acid chain: LINE-1 retrotransposable element ORF1 protein (357 aa).

The disordered stretch occupies residues methionine 1 to aspartate 40. Residues histidine 59 to glutamate 156 are a coiled coil. An RNA recognition motif (RRM) domain region spans residues asparagine 179–aspartate 274. The C-terminal domain (CTD) stretch occupies residues glutamate 278–isoleucine 339.

This sequence belongs to the transposase 22 family. As to quaternary structure, homotrimer (via coiled coil domain). May also form larger homooligomers. Interacts with Tex19.1 and UBR2. Interacts with MOV10. Post-translationally, polyubiquitinated, probably by UBR2, which induces its degradation. In terms of tissue distribution, expressed in meiotic spermatocytes and in the cerebellum (at protein level).

The protein resides in the nucleus. The protein localises to the nucleolus. It localises to the cytoplasm. Its subcellular location is the cytoplasmic ribonucleoprotein granule. It is found in the stress granule. Its function is as follows. Nucleic acid-binding protein which is essential for retrotransposition of LINE-1 elements in the genome. Functions as a nucleic acid chaperone binding its own transcript and therefore preferentially mobilizing the transcript from which they are encoded. The polypeptide is LINE-1 retrotransposable element ORF1 protein (Mus musculus (Mouse)).